A 467-amino-acid polypeptide reads, in one-letter code: Uronate isomerase (467 aa).

It belongs to the metallo-dependent hydrolases superfamily. Uronate isomerase family.

The enzyme catalyses D-glucuronate = D-fructuronate. It carries out the reaction aldehydo-D-galacturonate = keto-D-tagaturonate. It functions in the pathway carbohydrate metabolism; pentose and glucuronate interconversion. This chain is Uronate isomerase, found in Actinobacillus succinogenes (strain ATCC 55618 / DSM 22257 / CCUG 43843 / 130Z).